Consider the following 1468-residue polypeptide: Neuropathy target esterase sws (1468 aa).

The Lumenal portion of the chain corresponds to 1–34 (MDVLEMLRASASGSYNTIFSDAWCQYVSKQITAT). Residues 35–55 (VYMYCALVMMSLLFIAWFLYF) traverse the membrane as a helical segment. The Cytoplasmic portion of the chain corresponds to 56-1468 (KRMARLRLRD…RSSPNNETKN (1413 aa)). 174–301 (IFGHFEKPVF…IRVIQVIMIR (128 aa)) is an a nucleoside 3',5'-cyclic phosphate binding site. Polar residues-rich tracts occupy residues 332-348 (TMSG…SRQA) and 357-366 (NQLNLMQSAA). The tract at residues 332 to 411 (TMSGPINSQT…DGSFHGTTNL (80 aa)) is disordered. Phosphoserine is present on residues serine 442 and serine 451. A nucleoside 3',5'-cyclic phosphate is bound by residues 480–607 (ELGL…VVRR) and 596–723 (IVLD…LSHR). Residues 950–1116 (LVLGGGGARG…VNNLPGHLWR (167 aa)) form the PNPLA domain. A GXGXXG motif is present at residues 954-959 (GGGARG). Positions 981–985 (GVSIG) match the GXSXG motif. Residue serine 983 is the Nucleophile of the active site. Aspartate 1103 serves as the catalytic Proton acceptor. The DGA/G motif lies at 1103–1105 (DGG). Serine 1197 is subject to Phosphoserine. The disordered stretch occupies residues 1368 to 1468 (ERKMDKSTQS…RSSPNNETKN (101 aa)). A compositionally biased stretch (low complexity) spans 1374–1383 (STQSSPPTSS). The span at 1385 to 1395 (TDMRGKEEAKH) shows a compositional bias: basic and acidic residues. The segment covering 1419–1441 (TQTGQEQELQQQQKLQQLQQDQG) has biased composition (low complexity). Residues 1446 to 1459 (QLVDKDKEEDKENR) show a composition bias toward basic and acidic residues.

It belongs to the NTE family. In terms of assembly, interacts with Pka-C3; interaction inhibits the catalytic function of Pka-C3 and the esterase activity of sws.

Its subcellular location is the endoplasmic reticulum membrane. It catalyses the reaction a 1-acyl-sn-glycero-3-phosphocholine + H2O = sn-glycerol 3-phosphocholine + a fatty acid + H(+). Phospholipase B that deacylates intracellular phosphatidylcholine (PtdCho), generating glycerophosphocholine (GroPtdCho). This deacylation occurs at both sn-2 and sn-1 positions of PtdCho. Its specific chemical modification by certain organophosphorus (OP) compounds leads to distal axonopathy. Plays a role in the signaling mechanism between neurons and glia that regulates glia wrapping during development of the adult brain. Essential for membrane lipid homeostasis and cell survival in both neurons and glia of the adult brain. In Drosophila sechellia (Fruit fly), this protein is Neuropathy target esterase sws.